The chain runs to 354 residues: 3-dehydroquinate synthase (354 aa).

Residues 106 to 110 (GVIGD), 130 to 131 (TS), Lys143, and Lys152 contribute to the NAD(+) site. Positions 185, 246, and 262 each coordinate Zn(2+).

It belongs to the sugar phosphate cyclases superfamily. Dehydroquinate synthase family. The cofactor is Co(2+). Zn(2+) serves as cofactor. It depends on NAD(+) as a cofactor.

Its subcellular location is the cytoplasm. It carries out the reaction 7-phospho-2-dehydro-3-deoxy-D-arabino-heptonate = 3-dehydroquinate + phosphate. Its pathway is metabolic intermediate biosynthesis; chorismate biosynthesis; chorismate from D-erythrose 4-phosphate and phosphoenolpyruvate: step 2/7. Its function is as follows. Catalyzes the conversion of 3-deoxy-D-arabino-heptulosonate 7-phosphate (DAHP) to dehydroquinate (DHQ). The protein is 3-dehydroquinate synthase of Leuconostoc mesenteroides subsp. mesenteroides (strain ATCC 8293 / DSM 20343 / BCRC 11652 / CCM 1803 / JCM 6124 / NCDO 523 / NBRC 100496 / NCIMB 8023 / NCTC 12954 / NRRL B-1118 / 37Y).